The primary structure comprises 220 residues: ATP phosphoribosyltransferase (220 aa).

This sequence belongs to the ATP phosphoribosyltransferase family. Short subfamily. As to quaternary structure, heteromultimer composed of HisG and HisZ subunits.

It is found in the cytoplasm. The catalysed reaction is 1-(5-phospho-beta-D-ribosyl)-ATP + diphosphate = 5-phospho-alpha-D-ribose 1-diphosphate + ATP. It functions in the pathway amino-acid biosynthesis; L-histidine biosynthesis; L-histidine from 5-phospho-alpha-D-ribose 1-diphosphate: step 1/9. Catalyzes the condensation of ATP and 5-phosphoribose 1-diphosphate to form N'-(5'-phosphoribosyl)-ATP (PR-ATP). Has a crucial role in the pathway because the rate of histidine biosynthesis seems to be controlled primarily by regulation of HisG enzymatic activity. The sequence is that of ATP phosphoribosyltransferase from Anaeromyxobacter sp. (strain Fw109-5).